The primary structure comprises 463 residues: Serine carboxypeptidase-like 32 (463 aa).

An N-terminal signal peptide occupies residues 1–22 (MMNISNVSIALYLCTLFAFVSS). Cystine bridges form between cysteine 86–cysteine 345, cysteine 249–cysteine 262, and cysteine 286–cysteine 313. Asparagine 137 is a glycosylation site (N-linked (GlcNAc...) asparagine). Serine 179 is an active-site residue. Asparagine 201 and asparagine 250 each carry an N-linked (GlcNAc...) asparagine glycan. N-linked (GlcNAc...) asparagine glycans are attached at residues asparagine 341 and asparagine 354. Active-site residues include aspartate 384 and histidine 436.

The protein belongs to the peptidase S10 family. As to expression, expressed in flowers.

It is found in the secreted. In terms of biological role, probable carboxypeptidase. This is Serine carboxypeptidase-like 32 (SCPL32) from Arabidopsis thaliana (Mouse-ear cress).